Here is a 370-residue protein sequence, read N- to C-terminus: Cytochrome b (370 aa).

4 helical membrane-spanning segments follow: residues 25-45 (FGSM…FLAV), 69-90 (WLMQ…YIHI), 105-125 (WLSG…GYVL), and 170-190 (FFAL…LHIM). Heme b is bound by residues His-75 and His-89. Heme b is bound by residues His-174 and His-188. His-193 is an a ubiquinone binding site. Helical transmembrane passes span 218–238 (YKDL…VSFF), 280–300 (LGGA…PFTH), 312–332 (FMQL…WTAT), and 339–358 (FTTI…ISNP).

Belongs to the cytochrome b family. The cytochrome bc1 complex contains 3 respiratory subunits (MT-CYB, CYC1 and UQCRFS1), 2 core proteins (UQCRC1 and UQCRC2) and probably 6 low-molecular weight proteins. The cofactor is heme b.

The protein localises to the mitochondrion inner membrane. Its function is as follows. Component of the ubiquinol-cytochrome c reductase complex (complex III or cytochrome b-c1 complex) that is part of the mitochondrial respiratory chain. The b-c1 complex mediates electron transfer from ubiquinol to cytochrome c. Contributes to the generation of a proton gradient across the mitochondrial membrane that is then used for ATP synthesis. The chain is Cytochrome b (MT-CYB) from Chilabothrus fordii (Ford's boa).